The chain runs to 168 residues: HTH-type transcriptional regulator IscR (168 aa).

Residues 2 to 131 (KLTSKGRYAV…DGISLGELMV (130 aa)) enclose the HTH rrf2-type domain. The segment at residues 28 to 51 (LADISERQGISLSYLEQLFSKLRK) is a DNA-binding region (H-T-H motif). The [2Fe-2S] cluster site is built by cysteine 92, cysteine 98, and cysteine 104.

The cofactor is [2Fe-2S] cluster.

In terms of biological role, regulates the transcription of several operons and genes involved in the biogenesis of Fe-S clusters and Fe-S-containing proteins. In Aliivibrio salmonicida (strain LFI1238) (Vibrio salmonicida (strain LFI1238)), this protein is HTH-type transcriptional regulator IscR.